The primary structure comprises 635 residues: 1-deoxy-D-xylulose-5-phosphate synthase (635 aa).

Thiamine diphosphate contacts are provided by residues His72 and 113–115 (GHA). Asp144 contacts Mg(2+). Thiamine diphosphate-binding positions include 145-146 (GA), Asn174, Tyr287, and Glu370. Asn174 lines the Mg(2+) pocket.

The protein belongs to the transketolase family. DXPS subfamily. In terms of assembly, homodimer. Mg(2+) is required as a cofactor. Requires thiamine diphosphate as cofactor.

It carries out the reaction D-glyceraldehyde 3-phosphate + pyruvate + H(+) = 1-deoxy-D-xylulose 5-phosphate + CO2. It participates in metabolic intermediate biosynthesis; 1-deoxy-D-xylulose 5-phosphate biosynthesis; 1-deoxy-D-xylulose 5-phosphate from D-glyceraldehyde 3-phosphate and pyruvate: step 1/1. Its function is as follows. Catalyzes the acyloin condensation reaction between C atoms 2 and 3 of pyruvate and glyceraldehyde 3-phosphate to yield 1-deoxy-D-xylulose-5-phosphate (DXP). This Trichodesmium erythraeum (strain IMS101) protein is 1-deoxy-D-xylulose-5-phosphate synthase.